The following is a 158-amino-acid chain: uncharacterized protein (158 aa).

Residues 109 to 143 form an FPG-type zinc finger; sequence RVHARTGLPCPVCGDTVREVSFADKSFQYCPTCQT.

This is an uncharacterized protein from Mycobacterium tuberculosis (strain ATCC 25618 / H37Rv).